Reading from the N-terminus, the 493-residue chain is Cytochrome P450 2E1 (493 aa).

A substrate-binding site is contributed by 298 to 303 (FAGTET). Heme is bound at residue C437.

Belongs to the cytochrome P450 family. In terms of assembly, interacts with chaperones HSP70 and HSP90; this interaction is required for initial targeting to mitochondria. Heme is required as a cofactor.

The protein localises to the endoplasmic reticulum membrane. Its subcellular location is the microsome membrane. It localises to the mitochondrion inner membrane. The enzyme catalyses an organic molecule + reduced [NADPH--hemoprotein reductase] + O2 = an alcohol + oxidized [NADPH--hemoprotein reductase] + H2O + H(+). It catalyses the reaction (5Z,8Z,11Z)-eicosatrienoate + reduced [NADPH--hemoprotein reductase] + O2 = 19-hydroxy-(5Z,8Z,11Z)-eicosatrienoate + oxidized [NADPH--hemoprotein reductase] + H2O + H(+). It carries out the reaction (5Z,8Z,11Z,14Z,17Z)-eicosapentaenoate + reduced [NADPH--hemoprotein reductase] + O2 = 19-hydroxy-(5Z,8Z,11Z,14Z,17Z)-eicosapentaenoate + oxidized [NADPH--hemoprotein reductase] + H2O + H(+). The catalysed reaction is (4Z,7Z,10Z,13Z,16Z,19Z)-docosahexaenoate + reduced [NADPH--hemoprotein reductase] + O2 = 21-hydroxy-(4Z,7Z,10Z,13Z,16Z,19Z)-docosahexaenoate + oxidized [NADPH--hemoprotein reductase] + H2O + H(+). The enzyme catalyses dodecanoate + reduced [NADPH--hemoprotein reductase] + O2 = 11-hydroxydodecanoate + oxidized [NADPH--hemoprotein reductase] + H2O + H(+). It catalyses the reaction tetradecanoate + reduced [NADPH--hemoprotein reductase] + O2 = 13-hydroxytetradecanoate + oxidized [NADPH--hemoprotein reductase] + H2O + H(+). It carries out the reaction 4-nitrophenol + NADPH + O2 + H(+) = 4-nitrocatechol + NADP(+) + H2O. The protein operates within lipid metabolism; fatty acid metabolism. Its activity is regulated as follows. The omega-1 hydroxylase activity is stimulated by cytochrome b5. Its function is as follows. A cytochrome P450 monooxygenase involved in the metabolism of fatty acids. Mechanistically, uses molecular oxygen inserting one oxygen atom into a substrate, and reducing the second into a water molecule, with two electrons provided by NADPH via cytochrome P450 reductase (NADPH--hemoprotein reductase). Catalyzes the hydroxylation of carbon-hydrogen bonds. Hydroxylates fatty acids specifically at the omega-1 position displaying the highest catalytic activity for saturated fatty acids. May be involved in the oxidative metabolism of xenobiotics. This chain is Cytochrome P450 2E1, found in Homo sapiens (Human).